The chain runs to 111 residues: Ribosome-binding factor A (111 aa).

The protein belongs to the RbfA family. Monomer. Binds 30S ribosomal subunits, but not 50S ribosomal subunits or 70S ribosomes.

The protein resides in the cytoplasm. Functionally, one of several proteins that assist in the late maturation steps of the functional core of the 30S ribosomal subunit. Associates with free 30S ribosomal subunits (but not with 30S subunits that are part of 70S ribosomes or polysomes). Required for efficient processing of 16S rRNA. May interact with the 5'-terminal helix region of 16S rRNA. The sequence is that of Ribosome-binding factor A from Helicobacter pylori (strain Shi470).